The chain runs to 217 residues: NADPH-dependent 3-demethoxyubiquinone 3-hydroxylase, mitochondrial (217 aa).

2 tandem repeats follow at residues 49 to 130 (IIER…SALM) and 131 to 217 (GKEA…STRV). A 2 X approximate tandem repeats region spans residues 49-217 (IIERIIRVDH…KTAIWLSTRV (169 aa)). Arginine 52 contacts NADH. Fe cation contacts are provided by glutamate 61, glutamate 91, histidine 94, glutamate 143, glutamate 178, and histidine 181. NADH is bound at residue arginine 216.

Belongs to the COQ7 family. In terms of assembly, component of a multi-subunit COQ enzyme complex. Fe cation is required as a cofactor.

It is found in the mitochondrion inner membrane. It carries out the reaction a 5-methoxy-2-methyl-3-(all-trans-polyprenyl)benzoquinone + NADH + O2 = a 3-demethylubiquinone + NAD(+) + H2O. The protein operates within cofactor biosynthesis; ubiquinone biosynthesis. Functionally, catalyzes the hydroxylation of the 5-methoxy-2-methyl-3-(all-trans-polyprenyl)benzoquinone at the C6 position and participates in the biosynthesis of ubiquinone. Catalyzes the reaction through a substrate-mediated reduction pathway, whereby NADH shuttles electrons to 5-methoxy-2-methyl-3-(all-trans-decaprenyl)benzoquinone, which then transfers the electrons to the two Fe(3+) centers. The binding of 5-methoxy-2-methyl-3-(all-trans-polyprenyl)benzoquinone (DMQn) mediates reduction of the diiron center by nicotinamide adenine dinucleotide (NADH) and initiates oxygen activation for subsequent DMQ hydroxylation. Also has a structural role in the COQ enzyme complex, stabilizing other COQ polypeptides. The protein is NADPH-dependent 3-demethoxyubiquinone 3-hydroxylase, mitochondrial of Dictyostelium discoideum (Social amoeba).